Here is a 266-residue protein sequence, read N- to C-terminus: 2-C-methyl-D-erythritol 4-phosphate cytidylyltransferase (266 aa).

The interval 229–266 (NRDCGPGTRDPESAHPQSSVSASAFSGPGSRAPGPEEI) is disordered. Over residues 243-252 (HPQSSVSASA) the composition is skewed to polar residues.

The protein belongs to the IspD/TarI cytidylyltransferase family. IspD subfamily.

The catalysed reaction is 2-C-methyl-D-erythritol 4-phosphate + CTP + H(+) = 4-CDP-2-C-methyl-D-erythritol + diphosphate. It functions in the pathway isoprenoid biosynthesis; isopentenyl diphosphate biosynthesis via DXP pathway; isopentenyl diphosphate from 1-deoxy-D-xylulose 5-phosphate: step 2/6. Functionally, catalyzes the formation of 4-diphosphocytidyl-2-C-methyl-D-erythritol from CTP and 2-C-methyl-D-erythritol 4-phosphate (MEP). The chain is 2-C-methyl-D-erythritol 4-phosphate cytidylyltransferase from Xanthomonas axonopodis pv. citri (strain 306).